The sequence spans 98 residues: NADH-ubiquinone oxidoreductase chain 4L (98 aa).

The next 3 membrane-spanning stretches (helical) occupy residues 2–22 (PSIS…MLVF), 29–49 (SLLC…LFIM), and 61–81 (ILLL…LVMV).

Belongs to the complex I subunit 4L family. As to quaternary structure, core subunit of respiratory chain NADH dehydrogenase (Complex I) which is composed of 45 different subunits.

It localises to the mitochondrion inner membrane. It catalyses the reaction a ubiquinone + NADH + 5 H(+)(in) = a ubiquinol + NAD(+) + 4 H(+)(out). Functionally, core subunit of the mitochondrial membrane respiratory chain NADH dehydrogenase (Complex I) which catalyzes electron transfer from NADH through the respiratory chain, using ubiquinone as an electron acceptor. Part of the enzyme membrane arm which is embedded in the lipid bilayer and involved in proton translocation. This is NADH-ubiquinone oxidoreductase chain 4L (MT-ND4L) from Lepilemur sahamalazensis (Sahamalaza sportive lemur).